The following is a 104-amino-acid chain: Growth-regulated protein homolog (104 aa).

An N-terminal signal peptide occupies residues 1-31 (MAPAATAAAPRLLRAALLLLLLVAAGRRAAG). 2 cysteine pairs are disulfide-bonded: C40–C66 and C42–C82.

This sequence belongs to the intercrine alpha (chemokine CxC) family.

The protein localises to the secreted. Its function is as follows. Plays a role in monocyte adhesion to the endothelium. The polypeptide is Growth-regulated protein homolog (Oryctolagus cuniculus (Rabbit)).